A 236-amino-acid chain; its full sequence is Ubiquinone biosynthesis O-methyltransferase (236 aa).

Residues R39, G59, D80, and M124 each coordinate S-adenosyl-L-methionine.

Belongs to the methyltransferase superfamily. UbiG/COQ3 family.

The catalysed reaction is a 3-demethylubiquinol + S-adenosyl-L-methionine = a ubiquinol + S-adenosyl-L-homocysteine + H(+). It carries out the reaction a 3-(all-trans-polyprenyl)benzene-1,2-diol + S-adenosyl-L-methionine = a 2-methoxy-6-(all-trans-polyprenyl)phenol + S-adenosyl-L-homocysteine + H(+). It functions in the pathway cofactor biosynthesis; ubiquinone biosynthesis. Functionally, O-methyltransferase that catalyzes the 2 O-methylation steps in the ubiquinone biosynthetic pathway. The chain is Ubiquinone biosynthesis O-methyltransferase from Shewanella halifaxensis (strain HAW-EB4).